The primary structure comprises 443 residues: Zinc finger CCCH domain-containing protein 63 (443 aa).

2 disordered regions span residues 1-29 (MDFD…MAPT) and 56-99 (LPGP…SSSW). 2 consecutive C3H1-type zinc fingers follow at residues 30 to 56 (DTRQ…HREL) and 109 to 136 (TKTE…HCWS). 6 WD repeats span residues 149 to 190 (GHEK…GVLK), 228 to 265 (GPVG…NCFE), 272 to 311 (GHTL…QTLT), 313 to 349 (HSSV…NLEV), 354 to 396 (KEEH…LFIR), and 404 to 442 (FAKQ…TAAL).

This is Zinc finger CCCH domain-containing protein 63 (ZFWD2) from Arabidopsis thaliana (Mouse-ear cress).